The sequence spans 100 residues: uncharacterized protein (100 aa).

This is an uncharacterized protein from Archaeoglobus fulgidus (strain ATCC 49558 / DSM 4304 / JCM 9628 / NBRC 100126 / VC-16).